Consider the following 277-residue polypeptide: Large ribosomal subunit protein uL2 (277 aa).

Disordered stretches follow at residues 1–58 (MGIR…GGGH) and 223–277 (GVVM…GKKR). The span at 23–33 (EITRSEPEKSL) shows a compositional bias: basic and acidic residues. Positions 37–58 (LHGRGGRNAHGKITTRHKGGGH) are enriched in basic residues. Residues 251–267 (GKPEGRTRRNKPSDKLI) are compositionally biased toward basic and acidic residues. Residues 268–277 (VRRRRTGKKR) are compositionally biased toward basic residues.

This sequence belongs to the universal ribosomal protein uL2 family. In terms of assembly, part of the 50S ribosomal subunit. Forms a bridge to the 30S subunit in the 70S ribosome.

One of the primary rRNA binding proteins. Required for association of the 30S and 50S subunits to form the 70S ribosome, for tRNA binding and peptide bond formation. It has been suggested to have peptidyltransferase activity; this is somewhat controversial. Makes several contacts with the 16S rRNA in the 70S ribosome. The protein is Large ribosomal subunit protein uL2 of Saccharopolyspora erythraea (strain ATCC 11635 / DSM 40517 / JCM 4748 / NBRC 13426 / NCIMB 8594 / NRRL 2338).